The chain runs to 205 residues: Dr1-associated corepressor (205 aa).

Positions 14-77 (PARIKKIMQT…SHLKQCIELE (64 aa)) constitute a Histone-fold domain. A disordered region spans residues 91–205 (PDMQGDGEDN…EAEDEEDYDS (115 aa)). Basic and acidic residues predominate over residues 98–108 (EDNHTDGDKGP). A compositionally biased stretch (acidic residues) spans 138–155 (SEQEDESEDTDTDGEEET). Pro residues predominate over residues 172–193 (PPTPFMPFTSPLPLPPAPPGPS). Acidic residues predominate over residues 196 to 205 (EAEDEEDYDS).

It belongs to the NC2 alpha/DRAP1 family. In terms of assembly, heterodimer with DR1. Binds BTAF1. Post-translationally, phosphorylation reduces DNA binding, but has no effect on heterodimerization and TBP binding.

The protein localises to the nucleus. In terms of biological role, the association of the DR1/DRAP1 heterodimer with TBP results in a functional repression of both activated and basal transcription of class II genes. This interaction precludes the formation of a transcription-competent complex by inhibiting the association of TFIIA and/or TFIIB with TBP. Can bind to DNA on its own. The sequence is that of Dr1-associated corepressor from Rattus norvegicus (Rat).